We begin with the raw amino-acid sequence, 36 residues long: Peroxiredoxin-4 (36 aa).

This sequence belongs to the peroxiredoxin family. AhpC/Prx1 subfamily. As to quaternary structure, homodimer; disulfide-linked, upon oxidation. In terms of tissue distribution, venom gland.

The protein resides in the secreted. It carries out the reaction a hydroperoxide + [thioredoxin]-dithiol = an alcohol + [thioredoxin]-disulfide + H2O. Functionally, venom peroxiredoxin enzyme that may play a role as part of a redox pathway leading to the structural/functional diversification of toxins through a disulfide bond engineering mechanism. This chain is Peroxiredoxin-4, found in Crotalus atrox (Western diamondback rattlesnake).